The sequence spans 174 residues: Adenine phosphoribosyltransferase (174 aa).

Belongs to the purine/pyrimidine phosphoribosyltransferase family. In terms of assembly, homodimer.

Its subcellular location is the cytoplasm. It carries out the reaction AMP + diphosphate = 5-phospho-alpha-D-ribose 1-diphosphate + adenine. It participates in purine metabolism; AMP biosynthesis via salvage pathway; AMP from adenine: step 1/1. Functionally, catalyzes a salvage reaction resulting in the formation of AMP, that is energically less costly than de novo synthesis. In Nitrosomonas europaea (strain ATCC 19718 / CIP 103999 / KCTC 2705 / NBRC 14298), this protein is Adenine phosphoribosyltransferase.